A 523-amino-acid polypeptide reads, in one-letter code: Ribonuclease Y (523 aa).

The chain crosses the membrane as a helical span at residues 3-23; the sequence is VWYAIGSIIFGLLVGVSVYLI. The 67-residue stretch at 213 to 279 folds into the KH domain; that stretch reads LVNVINLPND…TKTIEKLVED (67 aa). The HD domain occupies 339-432; it reads ALGHSIEVAN…VCAADTLSAA (94 aa).

This sequence belongs to the RNase Y family.

The protein resides in the cell membrane. Its function is as follows. Endoribonuclease that initiates mRNA decay. This is Ribonuclease Y from Helicobacter hepaticus (strain ATCC 51449 / 3B1).